The sequence spans 74 residues: Conotoxin AbVIA (74 aa).

The first 17 residues, 1–17 (VLIIAVLFLTACQLTTA), serve as a signal peptide directing secretion. A propeptide spanning residues 18-38 (VTSSRGEQKHRALRSTDKKFK) is cleaved from the precursor. Intrachain disulfides connect C43/C57, C50/C61, and C56/C68. Serine amide is present on S73.

It belongs to the conotoxin O1 superfamily. In terms of tissue distribution, expressed by the venom duct.

Its subcellular location is the secreted. The polypeptide is Conotoxin AbVIA (Conus abbreviatus (Abbreviated cone)).